A 164-amino-acid polypeptide reads, in one-letter code: Endoribonuclease YbeY (164 aa).

Residues H124, H128, and H134 each coordinate Zn(2+).

The protein belongs to the endoribonuclease YbeY family. Requires Zn(2+) as cofactor.

Its subcellular location is the cytoplasm. Its function is as follows. Single strand-specific metallo-endoribonuclease involved in late-stage 70S ribosome quality control and in maturation of the 3' terminus of the 16S rRNA. The sequence is that of Endoribonuclease YbeY from Nitrosomonas europaea (strain ATCC 19718 / CIP 103999 / KCTC 2705 / NBRC 14298).